The primary structure comprises 364 residues: Alanine racemase (364 aa).

Lys-35 functions as the Proton acceptor; specific for D-alanine in the catalytic mechanism. N6-(pyridoxal phosphate)lysine is present on Lys-35. Arg-136 is a binding site for substrate. Tyr-261 serves as the catalytic Proton acceptor; specific for L-alanine. Met-309 is a binding site for substrate.

The protein belongs to the alanine racemase family. Requires pyridoxal 5'-phosphate as cofactor.

It carries out the reaction L-alanine = D-alanine. The protein operates within amino-acid biosynthesis; D-alanine biosynthesis; D-alanine from L-alanine: step 1/1. Functionally, catalyzes the interconversion of L-alanine and D-alanine. May also act on other amino acids. This chain is Alanine racemase (alr), found in Shewanella amazonensis (strain ATCC BAA-1098 / SB2B).